The sequence spans 602 residues: 4-hydroxy-3-methylbut-2-en-1-yl diphosphate synthase (flavodoxin) (602 aa).

Residues cysteine 508, cysteine 511, cysteine 543, and glutamate 550 each coordinate [4Fe-4S] cluster.

This sequence belongs to the IspG family. Requires [4Fe-4S] cluster as cofactor.

It carries out the reaction (2E)-4-hydroxy-3-methylbut-2-enyl diphosphate + oxidized [flavodoxin] + H2O + 2 H(+) = 2-C-methyl-D-erythritol 2,4-cyclic diphosphate + reduced [flavodoxin]. It functions in the pathway isoprenoid biosynthesis; isopentenyl diphosphate biosynthesis via DXP pathway; isopentenyl diphosphate from 1-deoxy-D-xylulose 5-phosphate: step 5/6. Converts 2C-methyl-D-erythritol 2,4-cyclodiphosphate (ME-2,4cPP) into 1-hydroxy-2-methyl-2-(E)-butenyl 4-diphosphate. In Chlamydia trachomatis serovar L2b (strain UCH-1/proctitis), this protein is 4-hydroxy-3-methylbut-2-en-1-yl diphosphate synthase (flavodoxin).